Here is a 311-residue protein sequence, read N- to C-terminus: Methionyl-tRNA formyltransferase (311 aa).

(6S)-5,6,7,8-tetrahydrofolate is bound at residue 110–113 (SLLP).

The protein belongs to the Fmt family.

It carries out the reaction L-methionyl-tRNA(fMet) + (6R)-10-formyltetrahydrofolate = N-formyl-L-methionyl-tRNA(fMet) + (6S)-5,6,7,8-tetrahydrofolate + H(+). Its function is as follows. Attaches a formyl group to the free amino group of methionyl-tRNA(fMet). The formyl group appears to play a dual role in the initiator identity of N-formylmethionyl-tRNA by promoting its recognition by IF2 and preventing the misappropriation of this tRNA by the elongation apparatus. The chain is Methionyl-tRNA formyltransferase from Streptococcus pyogenes serotype M6 (strain ATCC BAA-946 / MGAS10394).